Reading from the N-terminus, the 906-residue chain is Gamma-tubulin complex component 3 homolog (906 aa).

Positions 208–229 are enriched in polar residues; that stretch reads GQQPSQQSTTTKGLPNTVSRNV. Residues 208-242 are disordered; that stretch reads GQQPSQQSTTTKGLPNTVSRNVPRTRREGDSSGSV.

This sequence belongs to the TUBGCP family. Interacts with gamma-tubulin.

The protein localises to the cytoplasm. Its subcellular location is the cytoskeleton. It is found in the microtubule organizing center. It localises to the centrosome. In terms of biological role, necessary for the recruitment of gamma-tubulin to the centrosome and for the formation of a functional centrosome. The polypeptide is Gamma-tubulin complex component 3 homolog (tubgcp3) (Xenopus laevis (African clawed frog)).